A 148-amino-acid chain; its full sequence is Ribonuclease H (148 aa).

The RNase H type-1 domain occupies 3 to 144 (DKEQVVIYTD…ADQLANRGVA (142 aa)). 4 residues coordinate Mg(2+): D12, E50, D72, and D136. The disordered stretch occupies residues 125–148 (GHTGDPGNERADQLANRGVAELPR).

This sequence belongs to the RNase H family. As to quaternary structure, monomer. Mg(2+) serves as cofactor.

The protein resides in the cytoplasm. It carries out the reaction Endonucleolytic cleavage to 5'-phosphomonoester.. Its function is as follows. Endonuclease that specifically degrades the RNA of RNA-DNA hybrids. In Pseudomonas paraeruginosa (strain DSM 24068 / PA7) (Pseudomonas aeruginosa (strain PA7)), this protein is Ribonuclease H.